The sequence spans 371 residues: Protein MxiG (371 aa).

The helical transmembrane segment at 127–141 threads the bilayer; the sequence is VFFFFAVIVVLIIIF.

Its subcellular location is the cell inner membrane. The protein resides in the cell outer membrane. Functionally, involved in the secretion of the Ipa antigens. Involved in the intracellular dissemination of Shigella. Part of the Mxi-Spa secretion apparatus. The chain is Protein MxiG (mxiG) from Shigella flexneri.